The primary structure comprises 578 residues: Probable arginine--tRNA ligase, mitochondrial (578 aa).

The N-terminal 16 residues, 1 to 16, are a transit peptide targeting the mitochondrion; the sequence is MACGFRRAIACQLSRV. L-arginine is bound by residues 133-135, His144, Tyr322, Asp326, and Gln350; that span reads SPN. A 'HIGH' region motif is present at residues 133–144; it reads SPNVAKKFHVGH. N6-acetyllysine is present on Lys568.

It belongs to the class-I aminoacyl-tRNA synthetase family.

The protein resides in the mitochondrion membrane. It catalyses the reaction tRNA(Arg) + L-arginine + ATP = L-arginyl-tRNA(Arg) + AMP + diphosphate. Catalyzes the attachment of arginine to tRNA(Arg) in a two-step reaction: arginine is first activated by ATP to form Arg-AMP and then transferred to the acceptor end of tRNA(Arg). The protein is Probable arginine--tRNA ligase, mitochondrial (RARS2) of Pongo abelii (Sumatran orangutan).